We begin with the raw amino-acid sequence, 85 residues long: Hepcidin (85 aa).

An N-terminal signal peptide occupies residues 1-24 (MKTFSVAVAVAVVLAFICLQESSA). The propeptide occupies 25-64 (VPANEEQELEQQIYFADPEMPVESCKMPYYMRENRQGSPA). Intrachain disulfides connect C66–C83, C69–C72, C70–C79, and C73–C82.

As to quaternary structure, monomer. In terms of tissue distribution, expressed in all tissues tested, with highest levels of expression in kidney and lowest levels in liver. Intra-peritoneal injection of lipopolysaccharide results in increased expression in heart, spleen and stomach, but not in kidney or liver.

The protein localises to the secreted. Seems to act as a signaling molecule involved in the maintenance of iron homeostasis. Seems to be required in conjunction with HFE to regulate both intestinal iron absorption and iron storage in macrophages. Its function is as follows. Has very strong antibacterial activity against the marine Gram-negative bacteria V.alginolyticus (MIC=24 uM), V.fluvialis, V.harveyis (MIC=12 uM) and V.parahaemolyticus (MIC=6 uM). Has antibacterial activity against the Gram-negative bacteria A.hydrophila (MIC=6 uM), E.coli (MIC=24 uM), and E.coli BL21(DE3)plysS (MIC=6 uM), and the Gram-positive bacteria B.cereus (MIC=24 uM), B.subtilis (MIC=6 uM), C.glutamicum (MIC=3 uM), M.luteus (MIC=3 uM), M.lysodeikticus, S.aureus (MIC=6 uM) and S.epidermis (MIC=12 uM). Possesses antifungal activity against A.niger (MIC=24 uM), F.graminearum (MIC24 uM) and F.solani (MIC=24 uM), but lacks antifungal activity against the yeasts P.pastoris GS115 and C.albicans. The sequence is that of Hepcidin from Larimichthys crocea (Large yellow croaker).